Here is a 351-residue protein sequence, read N- to C-terminus: Hydroxymethylglutaryl-CoA synthase (351 aa).

Aspartate 30 lines the (3S)-3-hydroxy-3-methylglutaryl-CoA pocket. Catalysis depends on glutamate 82, which acts as the Proton donor/acceptor. Residues cysteine 114, serine 155, threonine 203, and histidine 236 each contribute to the (3S)-3-hydroxy-3-methylglutaryl-CoA site. The Acyl-thioester intermediate role is filled by cysteine 114. Histidine 236 serves as the catalytic Proton donor/acceptor. CoA is bound at residue arginine 241. 3 residues coordinate (3S)-3-hydroxy-3-methylglutaryl-CoA: arginine 245, asparagine 268, and serine 298.

It belongs to the thiolase-like superfamily. Archaeal HMG-CoA synthase family. In terms of assembly, interacts with acetoacetyl-CoA thiolase that catalyzes the precedent step in the pathway and with a DUF35 protein. The acetoacetyl-CoA thiolase/HMG-CoA synthase complex channels the intermediate via a fused CoA-binding site, which allows for efficient coupling of the endergonic thiolase reaction with the exergonic HMGCS reaction.

The catalysed reaction is acetoacetyl-CoA + acetyl-CoA + H2O = (3S)-3-hydroxy-3-methylglutaryl-CoA + CoA + H(+). It participates in metabolic intermediate biosynthesis; (R)-mevalonate biosynthesis; (R)-mevalonate from acetyl-CoA: step 2/3. Catalyzes the condensation of acetyl-CoA with acetoacetyl-CoA to form 3-hydroxy-3-methylglutaryl-CoA (HMG-CoA). Functions in the mevalonate (MVA) pathway leading to isopentenyl diphosphate (IPP), a key precursor for the biosynthesis of isoprenoid compounds that are building blocks of archaeal membrane lipids. The chain is Hydroxymethylglutaryl-CoA synthase from Pyrobaculum neutrophilum (strain DSM 2338 / JCM 9278 / NBRC 100436 / V24Sta) (Thermoproteus neutrophilus).